The primary structure comprises 498 residues: Aspartyl/glutamyl-tRNA(Asn/Gln) amidotransferase subunit B (498 aa).

The protein belongs to the GatB/GatE family. GatB subfamily. In terms of assembly, heterotrimer of A, B and C subunits.

It catalyses the reaction L-glutamyl-tRNA(Gln) + L-glutamine + ATP + H2O = L-glutaminyl-tRNA(Gln) + L-glutamate + ADP + phosphate + H(+). It carries out the reaction L-aspartyl-tRNA(Asn) + L-glutamine + ATP + H2O = L-asparaginyl-tRNA(Asn) + L-glutamate + ADP + phosphate + 2 H(+). Its function is as follows. Allows the formation of correctly charged Asn-tRNA(Asn) or Gln-tRNA(Gln) through the transamidation of misacylated Asp-tRNA(Asn) or Glu-tRNA(Gln) in organisms which lack either or both of asparaginyl-tRNA or glutaminyl-tRNA synthetases. The reaction takes place in the presence of glutamine and ATP through an activated phospho-Asp-tRNA(Asn) or phospho-Glu-tRNA(Gln). This is Aspartyl/glutamyl-tRNA(Asn/Gln) amidotransferase subunit B from Erythrobacter litoralis (strain HTCC2594).